We begin with the raw amino-acid sequence, 316 residues long: MSIKEQSLMTPYLQFDRSQWAALRDSVPMTLTEDEIAQLKGINEDLSLEEVAEIYLPLSRLLNFYISSNLRRQAVLEQFLGTNGQRIPYIISIAGSVAVGKSTTARVLQALLSRWPEHRRVELITTDGFLHPNQVLKERGLMKKKGFPESYDMHRLVKFVSDLKSGVPNVTAPVYSHLIYDVIPEGDKTVAQPDILILEGLNVLQSGMDYPHDPHHVLVSDFVDFSIYVDAPEELLQTWYINRFLKFREGAFTDPDSYFHNYAKLSKEEAVNTATSLWKEINWLNLKQNILPTRERASLIMTKSANHAVEQVRLRK.

95–102 (GSVAVGKS) is an ATP binding site.

It belongs to the prokaryotic pantothenate kinase family.

The protein resides in the cytoplasm. It catalyses the reaction (R)-pantothenate + ATP = (R)-4'-phosphopantothenate + ADP + H(+). Its pathway is cofactor biosynthesis; coenzyme A biosynthesis; CoA from (R)-pantothenate: step 1/5. The sequence is that of Pantothenate kinase from Salmonella gallinarum (strain 287/91 / NCTC 13346).